The sequence spans 170 residues: Shikimate kinase (170 aa).

Position 11–16 (11–16 (GAGKTT)) interacts with ATP. Residue T15 participates in Mg(2+) binding. Substrate is bound by residues D33, R57, and G80. Residue R119 coordinates ATP. R141 is a substrate binding site.

The protein belongs to the shikimate kinase family. Monomer. Mg(2+) serves as cofactor.

It localises to the cytoplasm. The enzyme catalyses shikimate + ATP = 3-phosphoshikimate + ADP + H(+). It functions in the pathway metabolic intermediate biosynthesis; chorismate biosynthesis; chorismate from D-erythrose 4-phosphate and phosphoenolpyruvate: step 5/7. In terms of biological role, catalyzes the specific phosphorylation of the 3-hydroxyl group of shikimic acid using ATP as a cosubstrate. The polypeptide is Shikimate kinase (Azobacteroides pseudotrichonymphae genomovar. CFP2).